The following is a 196-amino-acid chain: Chromophore lyase CpcT/CpeT (196 aa).

Belongs to the CpcT/CpeT biliprotein lyase family.

In terms of biological role, covalently attaches a chromophore to Cys residue(s) of phycobiliproteins. The chain is Chromophore lyase CpcT/CpeT from Synechocystis sp. (strain ATCC 27184 / PCC 6803 / Kazusa).